The sequence spans 135 residues: MIKHLRSYCLYLAWLFSCIGTLMSVYYSYILNVEPCLLCYYQRICLFPLVVILGIAAYREDISIKIYTLPLALVGFGIAIYQVCLQEIPGMTLDICGKVSCSTKLFLLGFITMPMASAAAFCAIACLLVLATKSK.

The chain crosses the membrane as a helical span at residues 7–26 (SYCLYLAWLFSCIGTLMSVY). The cysteines at positions 36 and 39 are disulfide-linked. 2 helical membrane-spanning segments follow: residues 41–60 (YQRI…AYRE) and 67–84 (YTLP…YQVC). Cysteines 96 and 101 form a disulfide. Residues 109-131 (GFITMPMASAAAFCAIACLLVLA) traverse the membrane as a helical segment.

It belongs to the DsbB family. BdbC subfamily.

The protein localises to the cell inner membrane. Required for disulfide bond formation in some proteins. The polypeptide is Probable disulfide formation protein (Chlamydia trachomatis serovar D (strain ATCC VR-885 / DSM 19411 / UW-3/Cx)).